Consider the following 269-residue polypeptide: ATP synthase subunit delta (269 aa).

This sequence belongs to the ATPase delta chain family. In terms of assembly, F-type ATPases have 2 components, F(1) - the catalytic core - and F(0) - the membrane proton channel. F(1) has five subunits: alpha(3), beta(3), gamma(1), delta(1), epsilon(1). F(0) has three main subunits: a(1), b(2) and c(10-14). The alpha and beta chains form an alternating ring which encloses part of the gamma chain. F(1) is attached to F(0) by a central stalk formed by the gamma and epsilon chains, while a peripheral stalk is formed by the delta and b chains.

The protein resides in the cell membrane. Its function is as follows. F(1)F(0) ATP synthase produces ATP from ADP in the presence of a proton or sodium gradient. F-type ATPases consist of two structural domains, F(1) containing the extramembraneous catalytic core and F(0) containing the membrane proton channel, linked together by a central stalk and a peripheral stalk. During catalysis, ATP synthesis in the catalytic domain of F(1) is coupled via a rotary mechanism of the central stalk subunits to proton translocation. This protein is part of the stalk that links CF(0) to CF(1). It either transmits conformational changes from CF(0) to CF(1) or is implicated in proton conduction. This chain is ATP synthase subunit delta, found in Thermobifida fusca (strain YX).